Here is a 326-residue protein sequence, read N- to C-terminus: Alkanal monooxygenase beta chain (326 aa).

Belongs to the bacterial luciferase oxidoreductase family. As to quaternary structure, heterodimer of an alpha and a beta chain.

It catalyses the reaction a long-chain fatty aldehyde + FMNH2 + O2 = a long-chain fatty acid + hnu + FMN + H2O + 2 H(+). In terms of biological role, light-emitting reaction in luminous bacteria. The specific role of the beta subunit is unknown, but it is absolutely required for bioluminescence activity. This is Alkanal monooxygenase beta chain (luxB) from Photobacterium leiognathi.